A 468-amino-acid chain; its full sequence is 3-isopropylmalate dehydratase large subunit (468 aa).

The [4Fe-4S] cluster site is built by Cys-347, Cys-408, and Cys-411.

The protein belongs to the aconitase/IPM isomerase family. LeuC type 1 subfamily. As to quaternary structure, heterodimer of LeuC and LeuD. Requires [4Fe-4S] cluster as cofactor.

The enzyme catalyses (2R,3S)-3-isopropylmalate = (2S)-2-isopropylmalate. It participates in amino-acid biosynthesis; L-leucine biosynthesis; L-leucine from 3-methyl-2-oxobutanoate: step 2/4. In terms of biological role, catalyzes the isomerization between 2-isopropylmalate and 3-isopropylmalate, via the formation of 2-isopropylmaleate. This is 3-isopropylmalate dehydratase large subunit from Methylobacillus flagellatus (strain ATCC 51484 / DSM 6875 / VKM B-1610 / KT).